The following is a 678-amino-acid chain: MTKNLLVELGLEELPAYVVTPSEKQLGEKMAAFLKENRLSFEAIQTFSTPRRLAVRVTGLSDKQSDLTEDFKGPAKKIALDSDGNFTKAAQGFVRGKGLTVEDIEFREIKGEEYVYVTKEEVGQSVEAIVPGVVDVLKSLTFPVSMHWAGNSFEYIRPVHTLTVLLDEQEFDLDFLDIKGSRVSRGHRFLGKETKIQSALSYEEDLRKQFVIADPCEREQMIVDQIKEIEAKHGVHIEIDADLLNEVLNLVEYPTAFMGSFDAKYLEVPEEVLVTSMKEHQRYFVVRDQDGKLLPNFISVRNGNAERLKNVIKGNEKVLVARLEDGEFFWREDQKLVISDLVEKLNNVTFHEKIGSLREHMIRTGQITVLLAEKAGLSVDETVDLARAAAIYKFDLLTGMVGEFDELQGIMGEKYTLLAGETPAVAAAIREHYMPTSAEGELPESKVGAVLAIADKLDTILSFFSVGLIPSGSNDPYALRRATQGVVRILDAFGWHIAMDELIDSLYALKFDSLTYENKAEVMDFIKARVDKMMGSTPKDIKEAVLAGSNFVVADMLEAASALVEVSKEEDFKPSVESLSRAFNLAEKAEGVATVDSALFENDQEKALAEAVETLVLSGPASQQLKQLFALSPVIDAFFENTMVMAEDQAVRQNRLAILSQLTKKAAKFACFNQINTK.

The protein belongs to the class-II aminoacyl-tRNA synthetase family. In terms of assembly, tetramer of two alpha and two beta subunits.

The protein localises to the cytoplasm. The enzyme catalyses tRNA(Gly) + glycine + ATP = glycyl-tRNA(Gly) + AMP + diphosphate. The chain is Glycine--tRNA ligase beta subunit from Streptococcus pneumoniae (strain Taiwan19F-14).